The chain runs to 619 residues: Auxin efflux carrier component 7 (619 aa).

Topologically, residues 1–7 (MITWHDL) are extracellular. A helical transmembrane segment spans residues 8–28 (YTVLTAVIPLYVAMILAYGSV). The Cytoplasmic segment spans residues 29–38 (RWWKIFSPDQ). Residues 39-59 (CSGINRFVAIFAVPLLSFHFI) form a helical membrane-spanning segment. Residue Val-51 participates in (indol-3-yl)acetate binding. Residues 60 to 71 (SSNNPYAMNLRF) lie on the Extracellular side of the membrane. The helical transmembrane segment at 72-92 (IAADTLQKLIMLTLLIIWANF) threads the bilayer. Residues 93–101 (TRSGSLEWS) are Cytoplasmic-facing. The helical transmembrane segment at 102–122 (ITIFSLSTLPNTLVMGIPLLI) threads the bilayer. (indol-3-yl)acetate-binding residues include Asn-112 and Leu-114. The Extracellular portion of the chain corresponds to 123–131 (AMYGEYSGS). Residues 132-152 (LMVQIVVLQCIIWYTLLLFLF) form a helical membrane-spanning segment. Residue Tyr-145 participates in (indol-3-yl)acetate binding. The Cytoplasmic portion of the chain corresponds to 153-479 (EYRGAKILIM…LIRNPNTYSS (327 aa)). Ser-229, Ser-246, and Ser-286 each carry phosphoserine. The segment at 306 to 340 (GAPGSYPAPNPEFSTGNKTGSKAPKENHHHVGKSN) is disordered. The residue at position 320 (Thr-320) is a Phosphothreonine. Ser-357 is modified (phosphoserine). A disordered region spans residues 393 to 413 (HTQNGENKAGPMNGDYGGEEE). Residues 480 to 500 (LIGLIWALVAFRWDVAMPKII) traverse the membrane as a helical segment. The Extracellular segment spans residues 501–503 (QQS). Residues 504–524 (ISILSDAGLGMAMFSLGLFMA) form a helical membrane-spanning segment. Residues 525 to 538 (LQPKLIACGNSTAT) lie on the Cytoplasmic side of the membrane. A helical transmembrane segment spans residues 539–559 (FAMAVRFFTGPAVMAVAAMAI). Topologically, residues 560–564 (GLRGD) are extracellular. A helical membrane pass occupies residues 565 to 585 (LLRVAIVQAALPQGIVPFVFA). Residues Ile-579 and Val-580 each coordinate (indol-3-yl)acetate. Over 586–598 (KEYNVHPAILSTG) the chain is Cytoplasmic. A helical transmembrane segment spans residues 599–619 (VIFGMLIALPITLVYYILLGL).

Belongs to the auxin efflux carrier (TC 2.A.69.1) family. In terms of assembly, homodimer.

It localises to the cell membrane. Its function is as follows. Acts as a component of the auxin efflux carrier. Mediates the initial auxin gradient which contributes to the establishment of the apical-basal axis in early embryogenesis. Together with PIN3 and PIN4, involved in the connective auxin transport (CAT) that ensures communication across the shoot system, and modulates strigolactone-mediated shoot branching control. The abcb19 pin3 pin4 pin7 quadruple mutant exhibits an additive phenotype on strigolactone-mediated bud outgrowth responses and shoot branching control. This chain is Auxin efflux carrier component 7, found in Arabidopsis thaliana (Mouse-ear cress).